Reading from the N-terminus, the 147-residue chain is Deoxyuridine 5'-triphosphate nucleotidohydrolase (147 aa).

Substrate contacts are provided by residues 63-65 (RSG), asparagine 76, and 80-82 (TID).

Belongs to the dUTPase family. The cofactor is Mg(2+).

The enzyme catalyses dUTP + H2O = dUMP + diphosphate + H(+). It participates in pyrimidine metabolism; dUMP biosynthesis; dUMP from dCTP (dUTP route): step 2/2. Its function is as follows. This enzyme is involved in nucleotide metabolism: it produces dUMP, the immediate precursor of thymidine nucleotides and it decreases the intracellular concentration of dUTP so that uracil cannot be incorporated into DNA. In Chlamydia caviae (strain ATCC VR-813 / DSM 19441 / 03DC25 / GPIC) (Chlamydophila caviae), this protein is Deoxyuridine 5'-triphosphate nucleotidohydrolase.